Consider the following 334-residue polypeptide: N-acetyl-gamma-glutamyl-phosphate reductase (334 aa).

Cys154 is an active-site residue.

Belongs to the NAGSA dehydrogenase family. Type 1 subfamily.

The protein resides in the cytoplasm. The enzyme catalyses N-acetyl-L-glutamate 5-semialdehyde + phosphate + NADP(+) = N-acetyl-L-glutamyl 5-phosphate + NADPH + H(+). It participates in amino-acid biosynthesis; L-arginine biosynthesis; N(2)-acetyl-L-ornithine from L-glutamate: step 3/4. Catalyzes the NADPH-dependent reduction of N-acetyl-5-glutamyl phosphate to yield N-acetyl-L-glutamate 5-semialdehyde. This Escherichia coli O6:H1 (strain CFT073 / ATCC 700928 / UPEC) protein is N-acetyl-gamma-glutamyl-phosphate reductase.